A 237-amino-acid polypeptide reads, in one-letter code: MRLKIKAIWVPTVPDIEYLKKLALRGAVNKTVKVSSSEFHKHTGDSSKTAARKLKQMEEERLIERKIVPGGQLIKMTEKGIEILKNEYIEYSRIFSSEPDVLELEGNVLKGLGEGQYYINIPGYRNQFEEKLNFVPFPGTLNVQLSESSSALRNRLKEMPAVRIDGFNDGERTFGGGNCYPIKVEGIEAAVVVPDRTHYPADLIEIIAPVKLRDALKLKDGDRIVTRVKKQGMEGQK.

Residues 1–101 form a unknown region; the sequence is MRLKIKAIWV…SRIFSSEPDV (101 aa). A riboflavin kinase region spans residues 102 to 237; sequence LELEGNVLKG…VKKQGMEGQK (136 aa). Residue 111–116 participates in CDP binding; sequence GLGEGQ. Mg(2+) is bound by residues Thr-140 and Asn-142. The FMN site is built by Thr-197 and Glu-205. A CDP-binding site is contributed by 210–213; it reads VKLR.

The protein belongs to the archaeal riboflavin kinase family. Mg(2+) serves as cofactor.

It carries out the reaction riboflavin + CTP = CDP + FMN + H(+). It participates in cofactor biosynthesis; FMN biosynthesis; FMN from riboflavin (CTP route): step 1/1. Functionally, catalyzes the CTP-dependent phosphorylation of riboflavin (vitamin B2) to form flavin mononucleotide (FMN). The protein is Riboflavin kinase (ribK) of Methanosarcina acetivorans (strain ATCC 35395 / DSM 2834 / JCM 12185 / C2A).